Consider the following 229-residue polypeptide: Putative N-acetylmannosamine-6-phosphate 2-epimerase (229 aa).

Belongs to the NanE family.

It carries out the reaction an N-acyl-D-glucosamine 6-phosphate = an N-acyl-D-mannosamine 6-phosphate. It participates in amino-sugar metabolism; N-acetylneuraminate degradation; D-fructose 6-phosphate from N-acetylneuraminate: step 3/5. Its function is as follows. Converts N-acetylmannosamine-6-phosphate (ManNAc-6-P) to N-acetylglucosamine-6-phosphate (GlcNAc-6-P). This chain is Putative N-acetylmannosamine-6-phosphate 2-epimerase, found in Shigella dysenteriae serotype 1 (strain Sd197).